Reading from the N-terminus, the 2662-residue chain is Centrosome-associated protein CEP250L1 (2662 aa).

2 coiled-coil regions span residues 1030 to 1248 (KVHY…EEEE) and 1281 to 1719 (ARTH…IDAQ).

The protein localises to the cytoplasm. It is found in the cytoskeleton. It localises to the microtubule organizing center. Its subcellular location is the centrosome. Part of the centrosome inner core complex. Plays a role in the formation and/or stabilization of the mitotic spindle. Required for proper nuclear segregation and DNA partitioning during cell division. This Toxoplasma gondii (strain ATCC 50611 / Me49) protein is Centrosome-associated protein CEP250L1.